The sequence spans 473 residues: MTRPVVTRFAPSPTGFLHIGGGRTALFNWLYARKHGGTMLLRIEDTDRQRSTQEAIDAILDGLKWLGIDWDGDTVYQFARAARHREVAEQLLAAGKAYRCYATAEELTAMRDKARAEGRAKLYDGSWRDRDPSEAPAGVKPTIRLKAPLTGETVIEDQVQGRVAWQNENLDDLVLLRGDGTPTYMLAVVVDDHDMGVTHVIRGDDHLINAARQKQIYDAMEWELPVMAHIPLIHGPDGSKLSKRHGALGVDAYRAMGYLPAALRNYLVRLGWSHGDQEIFTTQEMIDAFDLPAIGRSAARFDFAKLESLNGHYIRQSDDHSLVTLLEDLLKYIPQGPAIATKFDDSIRAKLTQAMPGLKERAKTLIELLDNAGFIFADRPLALDPKAQAVLTPETRQLIGRLRAALEDVSPWTAATTEAAMRAFAEQAGLKLGAVAQPLRVALTGRTTSPGIFDVLAVLGRDECLSRLADQSA.

The 'HIGH' region motif lies at proline 11–glycine 21. The 'KMSKS' region motif lies at lysine 240–arginine 244. Residue lysine 243 participates in ATP binding.

Belongs to the class-I aminoacyl-tRNA synthetase family. Glutamate--tRNA ligase type 1 subfamily. In terms of assembly, monomer.

Its subcellular location is the cytoplasm. The catalysed reaction is tRNA(Glu) + L-glutamate + ATP = L-glutamyl-tRNA(Glu) + AMP + diphosphate. Functionally, catalyzes the attachment of glutamate to tRNA(Glu) in a two-step reaction: glutamate is first activated by ATP to form Glu-AMP and then transferred to the acceptor end of tRNA(Glu). This chain is Glutamate--tRNA ligase, found in Rhodopseudomonas palustris (strain ATCC BAA-98 / CGA009).